Reading from the N-terminus, the 652-residue chain is Neuroendocrine convertase 2 (652 aa).

A signal peptide spans methionine 1–alanine 22. The propeptide occupies valine 23–arginine 107. Positions glutamine 136–valine 481 constitute a Peptidase S8 domain. Asparagine 167 carries N-linked (GlcNAc...) asparagine glycosylation. Active-site charge relay system residues include aspartate 174 and histidine 215. 2 cysteine pairs are disulfide-bonded: cysteine 232/cysteine 382 and cysteine 324/cysteine 354. Asparagine 290 carries N-linked (GlcNAc...) asparagine glycosylation. The Charge relay system role is filled by serine 390. N-linked (GlcNAc...) asparagine glycosylation is present at asparagine 451. A P/Homo B domain is found at threonine 489–alanine 625. Residues cysteine 496 and cysteine 522 are joined by a disulfide bond. Residues isoleucine 501–histidine 652 are required for ubiquitination-mediated degradation. A glycan (N-linked (GlcNAc...) asparagine) is linked at asparagine 542.

The protein belongs to the peptidase S8 family. Furin subfamily. Interacts (via C-terminus) with F-box protein fsn-1 (via SPRY domain); the interaction results in egl-3 proteasomal degradation. In terms of processing, ubiquitinated. In terms of tissue distribution, expressed in head and tail ganglia. Expressed in neurons including mechanosensory and motor neurons, and interneurons (at protein level). Expressed in the nerve ring, ventral nerve cord and intestine.

It localises to the cell projection. Its subcellular location is the axon. It is found in the cytoplasmic vesicle. The protein resides in the secretory vesicle lumen. The protein localises to the secreted. It carries out the reaction Release of protein hormones and neuropeptides from their precursors, generally by hydrolysis of -Lys-Arg-|- bonds.. Serine endoprotease which cleaves preproteins at paired basic amino acids. Processes FMRFamide-like (flp) and neuropeptide-like protein (nlp) neuropeptides. Probably by processing flp-1 and flp-18, modulates the neuronal excitation-inhibition balance and thus the level of activity of the locomotor circuit. Regulates sensitivity to mechanosensory stimuli. By processing neuropeptides, modulates basal acetylcholine release at the ventral cord neuromuscular junctions. Probably by processing flp neuropeptides, regulates the turning step of male mating behavior. Cleaves pro-insulin-like proteins ins-3, ins-4 and ins-6 into their mature active forms. Together with convertase kpc-1, cleaves pro-insulin-like protein ins-18. By controlling ins-4 and ins-6 processing and thus the activation of the daf-2/InsR pathway, negatively modulates synapse development and synaptic transmission at neuromuscular junctions. Similarly, by controlling ins-4 and ins-6 processing, negatively regulates dauer formation under optimal environmental conditions. Under adverse environmental conditions, may promote dauer formation by processing ins-18, a daf-2/InsR antagonist. May cleave dense-core vesicle membrane protein ida-1. Involved in egg-laying, fat storage and locomotion. This chain is Neuroendocrine convertase 2, found in Caenorhabditis elegans.